Reading from the N-terminus, the 104-residue chain is Large ribosomal subunit protein bL28 (104 aa).

It belongs to the bacterial ribosomal protein bL28 family.

The protein is Large ribosomal subunit protein bL28 of Wolbachia pipientis wMel.